The following is a 70-amino-acid chain: UPF0337 protein BT9727_3385 (70 aa).

Belongs to the UPF0337 (CsbD) family.

The polypeptide is UPF0337 protein BT9727_3385 (Bacillus thuringiensis subsp. konkukian (strain 97-27)).